Consider the following 314-residue polypeptide: GDSL-like esterase Rv1075c (314 aa).

Positions 1 to 21 are cleaved as a signal peptide; the sequence is MPRRSTIALATAGALASTGTA. The active-site Nucleophile is the Ser-80. The Proton donor role is filled by Asp-244. Catalysis depends on His-247, which acts as the Proton acceptor. A disordered region spans residues 276 to 314; that stretch reads IHETPSRPGTATLEPGHTRHSMMSRLRRPRPARAVPTGG. A compositionally biased stretch (basic residues) spans 293 to 306; the sequence is TRHSMMSRLRRPRP.

It belongs to the 'GDSL' lipolytic enzyme family.

It catalyses the reaction an acetyl ester + H2O = an aliphatic alcohol + acetate + H(+). The enzyme catalyses a butanoate ester + H2O = an aliphatic alcohol + butanoate + H(+). It carries out the reaction triacetin + H2O = diacetylglycerol + acetate + H(+). The catalysed reaction is 1,2,3-tributanoylglycerol + H2O = dibutanoylglycerol + butanoate + H(+). With respect to regulation, esterase activity is significantly inhibited by the serine modifier phenylmethylsulfonyl fluoride (PMSF). Completely inhibited by diethyl pyrocarbonate. In terms of biological role, esterase that preferentially hydrolyzes short-chain fatty acids, particularly pNP-acetate (C2) and pNP-butyrate (C4). Also has weak activity with pNP-hexanoate (C6) and pNP-octanoate (C8). It can also hydrolyze short-chain tryglycerides such as triacetin and tributyrin. Important for intracellular survival. The chain is GDSL-like esterase Rv1075c from Mycobacterium tuberculosis (strain ATCC 25618 / H37Rv).